The following is a 257-amino-acid chain: MSLIDIQNLTIKNTSEKSLIKGIDLKIFSQQINALIGESGAGKSLIAKALLEYLPFDLSCTYDSYQFDGENVSRLSQYYGHTIGYISQNYAESFNDHTKLGKQLTAIYRKHYKGSKEEALSKVDKALSWVNLQSKDILNKYSFQLSGGQLERVYIASVLMLEPKLIIADEPVASLDALNGNQVMDLLQHIVLEHGQTLFIITHNLSHVLKYCQYIYVLKEGQIIERGNINHFKYEHLHPYTERLIKYRTQLKRDYYD.

The region spanning 4-245 (IDIQNLTIKN…HLHPYTERLI (242 aa)) is the ABC transporter domain. Position 37 to 44 (37 to 44 (GESGAGKS)) interacts with ATP.

Belongs to the ABC transporter superfamily. In terms of assembly, the complex is composed of two ATP-binding proteins (NikD and NikE), two transmembrane proteins (NikB and NikC) and a solute-binding protein (NikA).

The protein resides in the cell membrane. It catalyses the reaction Ni(2+)(out) + ATP + H2O = Ni(2+)(in) + ADP + phosphate + H(+). In terms of biological role, part of the ABC transporter complex NikABCDE (Opp2) involved in nickel import. Probably responsible for energy coupling to the transport system. This chain is Nickel import system ATP-binding protein NikD, found in Staphylococcus aureus (strain MSSA476).